A 1211-amino-acid chain; its full sequence is Diacylglycerol kinase eta (1211 aa).

The interval 1–66 is disordered; sequence MAGAGSQHHP…QMRTKTSIKE (66 aa). Positions 19 to 32 are enriched in low complexity; that stretch reads AGASAVSPTAAGPG. The segment covering 52–61 has biased composition (polar residues); it reads VSTSGQMRTK. Residues 62 to 155 enclose the PH domain; the sequence is TSIKEGQLLK…WISSLKSVQS (94 aa). Phorbol-ester/DAG-type zinc fingers lie at residues 172–222 and 244–295; these read MHNW…TNNC and PHQW…HPVC. A DAGKc domain is found at 325–460; sequence FCVSPLLVFV…LDRWSIMTYE (136 aa). 2 disordered regions span residues 562–613 and 634–694; these read SQAS…KPRE and KVMD…SVAG. 2 stretches are compositionally biased toward acidic residues: residues 576–589 and 653–662; these read PEED…DESL and YDTETDEAKE. Over residues 670–691 the composition is skewed to polar residues; the sequence is SAKTTSQSPDAQASCGHPQTDS. An SAM domain is found at 1143-1206; the sequence is WGTEEVAAWL…LQGIKELERN (64 aa).

This sequence belongs to the eukaryotic diacylglycerol kinase family. Interacts with RAF1 and BRAF. In terms of assembly, homooligomers. Heterooligomers. Oligomerization through the SAM domain inhibits the diacylglycerol kinase activity. Heterooligomerizes with SAM domain-containing isoforms of DGKD. As to quaternary structure, does not form homooligomers. Phosphorylated. Phosphorylation does not inhibit catalytic activity. In terms of tissue distribution, widely expressed. Detected in the granulosa cells of the primary and secondary follicles. Expressed in mature follicles and corpus lutea. Expressed in the oviductal epithelium. In the uterus, strongly expressed in the luminal epithelium. Detected in the uterine glands. As to expression, detected in ovary and uterus (at protein level). Specifically expressed in testis. Detected in the inner area of the testis. Strongly expressed in the secondary spermatocytes and the round spermatids and weakly detected in the primary spermatocytes.

The protein localises to the cytoplasm. Its subcellular location is the cell membrane. It is found in the cytoskeleton. The catalysed reaction is a 1,2-diacyl-sn-glycerol + ATP = a 1,2-diacyl-sn-glycero-3-phosphate + ADP + H(+). It carries out the reaction 1,2-di-(9Z-octadecenoyl)-sn-glycerol + ATP = 1,2-di-(9Z-octadecenoyl)-sn-glycero-3-phosphate + ADP + H(+). It functions in the pathway lipid metabolism; glycerolipid metabolism. Functionally, diacylglycerol kinase that converts diacylglycerol/DAG into phosphatidic acid/phosphatidate/PA and regulates the respective levels of these two bioactive lipids. Thereby, acts as a central switch between the signaling pathways activated by these second messengers with different cellular targets and opposite effects in numerous biological processes. Plays a key role in promoting cell growth. Activates the Ras/B-Raf/C-Raf/MEK/ERK signaling pathway induced by EGF. Regulates the recruitment of RAF1 and BRAF from cytoplasm to membranes and their heterodimerization. The polypeptide is Diacylglycerol kinase eta (Mus musculus (Mouse)).